Here is a 565-residue protein sequence, read N- to C-terminus: Sulfite reductase [NADPH] hemoprotein beta-component (565 aa).

Positions 429, 435, 474, and 478 each coordinate [4Fe-4S] cluster. Cys478 provides a ligand contact to siroheme.

It belongs to the nitrite and sulfite reductase 4Fe-4S domain family. As to quaternary structure, alpha(8)-beta(8). The alpha component is a flavoprotein, the beta component is a hemoprotein. Siroheme serves as cofactor. It depends on [4Fe-4S] cluster as a cofactor.

The catalysed reaction is hydrogen sulfide + 3 NADP(+) + 3 H2O = sulfite + 3 NADPH + 4 H(+). It functions in the pathway sulfur metabolism; hydrogen sulfide biosynthesis; hydrogen sulfide from sulfite (NADPH route): step 1/1. Functionally, component of the sulfite reductase complex that catalyzes the 6-electron reduction of sulfite to sulfide. This is one of several activities required for the biosynthesis of L-cysteine from sulfate. The protein is Sulfite reductase [NADPH] hemoprotein beta-component of Shewanella baltica (strain OS185).